The chain runs to 574 residues: Lengsin (574 aa).

Disordered stretches follow at residues 1 to 36 (MNDE…KVTK) and 66 to 131 (GNMS…IPTT). Basic and acidic residues predominate over residues 11–23 (NTRDEGNETEASR). The segment covering 25-36 (SKLRRTRKKVTK) has biased composition (basic residues). Residues 91 to 131 (NQTTVIKPSPLKTSASAPCSEFNTNSNHADNTWEDTQIPTT) are compositionally biased toward polar residues. The 95-residue stretch at 148 to 242 (NHLQFVRFEA…VICDTFTVTG (95 aa)) folds into the GS beta-grasp domain. The 326-residue stretch at 249 to 574 (PRYIAKRQLS…ERNKFLEYFI (326 aa)) folds into the GS catalytic domain.

It belongs to the glutamine synthetase family. Dodecamer. Interacts with BFSP2 and VIM.

Functionally, may act as a component of the cytoskeleton or as a chaperone for the reorganization of intermediate filament proteins during terminal differentiation in the lens. Does not seem to have enzymatic activity. The chain is Lengsin (LGSN) from Canis lupus familiaris (Dog).